The sequence spans 329 residues: uncharacterized protein (329 aa).

Positions 109–147 are disordered; it reads KALGNDQTSSMTSSTTAVTVAKSGDGQQQTGEQKEEDWK. Residues 116-131 are compositionally biased toward low complexity; that stretch reads TSSMTSSTTAVTVAKS.

It to the C-terminal of MG321/MPN_456.

This is an uncharacterized protein from Mycoplasma pneumoniae (strain ATCC 29342 / M129 / Subtype 1) (Mycoplasmoides pneumoniae).